A 342-amino-acid polypeptide reads, in one-letter code: Fructose-1,6-bisphosphatase class 1 (342 aa).

Mg(2+)-binding residues include E91, D113, L115, and D116. Residues 116–119 (DGSS), N211, and K277 contribute to the substrate site. E283 lines the Mg(2+) pocket.

The protein belongs to the FBPase class 1 family. As to quaternary structure, homotetramer. The cofactor is Mg(2+).

It is found in the cytoplasm. It carries out the reaction beta-D-fructose 1,6-bisphosphate + H2O = beta-D-fructose 6-phosphate + phosphate. The protein operates within carbohydrate biosynthesis; gluconeogenesis. The polypeptide is Fructose-1,6-bisphosphatase class 1 (Bordetella petrii (strain ATCC BAA-461 / DSM 12804 / CCUG 43448)).